Consider the following 409-residue polypeptide: Peptidase T (409 aa).

Residue His-80 coordinates Zn(2+). Asp-82 is a catalytic residue. Zn(2+) is bound at residue Asp-143. Catalysis depends on Glu-177, which acts as the Proton acceptor. Zn(2+) contacts are provided by Glu-178, Asp-200, and His-382.

The protein belongs to the peptidase M20B family. It depends on Zn(2+) as a cofactor.

The protein localises to the cytoplasm. The catalysed reaction is Release of the N-terminal residue from a tripeptide.. In terms of biological role, cleaves the N-terminal amino acid of tripeptides. In Enterococcus faecalis (strain ATCC 700802 / V583), this protein is Peptidase T.